The sequence spans 235 residues: Ribosomal RNA-processing protein 17 (235 aa).

A coiled-coil region spans residues 49–110 (QRQKKAQEFI…AKNDKTEDLQ (62 aa)). Residues 99-108 (EDAKNDKTED) show a composition bias toward basic and acidic residues. Disordered regions lie at residues 99-138 (EDAKNDKTEDLQVESDESWHGFDSDKDDGDNDNNESSVKP) and 209-235 (RVKKFRYLTKNERRINQRKANDNKRRR). 3 positions are modified to phosphoserine: S113, S116, and S122. A compositionally biased stretch (basic and acidic residues) spans 217–235 (TKNERRINQRKANDNKRRR).

This sequence belongs to the RRP17 family.

It localises to the nucleus. It is found in the nucleolus. Essential protein involved in ribosomal RNA processing. This is Ribosomal RNA-processing protein 17 (RRP17) from Saccharomyces cerevisiae (strain ATCC 204508 / S288c) (Baker's yeast).